A 115-amino-acid chain; its full sequence is U17-barytoxin-Tl1b (115 aa).

The N-terminal stretch at 1–20 (MKTIIVFLSLLVLATKFGDA) is a signal peptide. Residues 21 to 74 (KEGVNQKQKKEVTQNEFREEYLNEMAAMSLVQQLEAIERALFENEAGRNSRQKR) constitute a propeptide that is removed on maturation. 3 disulfides stabilise this stretch: C75–C89, C82–C94, and C88–C109.

It belongs to the neurotoxin 14 (magi-1) family. 03 (ICK-30-40) subfamily. In terms of tissue distribution, expressed by the venom gland.

The protein localises to the secreted. Its function is as follows. Ion channel inhibitor. In Trittame loki (Brush-footed trapdoor spider), this protein is U17-barytoxin-Tl1b.